We begin with the raw amino-acid sequence, 752 residues long: Maltodextrin phosphorylase (752 aa).

An N6-(pyridoxal phosphate)lysine modification is found at K603.

It belongs to the glycogen phosphorylase family. Pyridoxal 5'-phosphate serves as cofactor.

The enzyme catalyses [(1-&gt;4)-alpha-D-glucosyl](n) + phosphate = [(1-&gt;4)-alpha-D-glucosyl](n-1) + alpha-D-glucose 1-phosphate. In terms of biological role, phosphorylase is an important allosteric enzyme in carbohydrate metabolism. Enzymes from different sources differ in their regulatory mechanisms and in their natural substrates. However, all known phosphorylases share catalytic and structural properties. The chain is Maltodextrin phosphorylase (malP) from Streptococcus pneumoniae serotype 4 (strain ATCC BAA-334 / TIGR4).